Consider the following 325-residue polypeptide: Phospholipid phosphatase-related protein type 1 (325 aa).

An N-linked (GlcNAc...) asparagine glycan is attached at Asn5. 3 helical membrane-spanning segments follow: residues 13 to 33 (IIPCFIFVELVIMAGTVLLAY), 67 to 87 (FISPLVLYCVLAATPTAIIFI), and 127 to 147 (FIGVFAFGLFATDIFVNAGQV). N-linked (GlcNAc...) asparagine glycosylation is present at Asn163. A run of 3 helical transmembrane segments spans residues 201–218 (AALSIYSALYATMYITST), 230–247 (VLCLGTLCTAFLTGLNRV), and 257–277 (VIAGFILGTAVALFLGMCVVH). Ser307 bears the Phosphoserine mark. N-linked (GlcNAc...) asparagine glycosylation is present at Asn316.

This sequence belongs to the PA-phosphatase related phosphoesterase family.

The protein localises to the cell membrane. The protein resides in the cell projection. Its subcellular location is the neuron projection. Its function is as follows. May play a role in neurite outgrowth and neurogenesis. The sequence is that of Phospholipid phosphatase-related protein type 1 from Mus musculus (Mouse).